The chain runs to 282 residues: uncharacterized protein (282 aa).

Helical transmembrane passes span 18 to 38 (PIVLLIPVPGSSVIHDLWAGT), 40 to 60 (LLVVFGISVLLTFYPGWVTIG), 87 to 107 (LWIVLAIGFLTAALAGGTPVV), 119 to 139 (ALHFLRITALSVVLLALGAMV), 164 to 184 (IPVDEWAVALALALRAFPMLI), and 260 to 280 (VTLAITAMASGTAVAIESLIL).

It belongs to the CbiQ family.

It is found in the cell membrane. This is an uncharacterized protein from Mycobacterium tuberculosis (strain CDC 1551 / Oshkosh).